The primary structure comprises 427 residues: Glutamate-1-semialdehyde 2,1-aminomutase (427 aa).

An N6-(pyridoxal phosphate)lysine modification is found at Lys267.

This sequence belongs to the class-III pyridoxal-phosphate-dependent aminotransferase family. HemL subfamily. In terms of assembly, homodimer. The cofactor is pyridoxal 5'-phosphate.

It is found in the cytoplasm. It catalyses the reaction (S)-4-amino-5-oxopentanoate = 5-aminolevulinate. It participates in porphyrin-containing compound metabolism; protoporphyrin-IX biosynthesis; 5-aminolevulinate from L-glutamyl-tRNA(Glu): step 2/2. The polypeptide is Glutamate-1-semialdehyde 2,1-aminomutase (Desulfosudis oleivorans (strain DSM 6200 / JCM 39069 / Hxd3) (Desulfococcus oleovorans)).